Consider the following 142-residue polypeptide: Prefoldin subunit alpha (142 aa).

The protein belongs to the prefoldin subunit alpha family. As to quaternary structure, heterohexamer of two alpha and four beta subunits.

The protein localises to the cytoplasm. Molecular chaperone capable of stabilizing a range of proteins. Seems to fulfill an ATP-independent, HSP70-like function in archaeal de novo protein folding. This chain is Prefoldin subunit alpha, found in Methanosarcina mazei (strain ATCC BAA-159 / DSM 3647 / Goe1 / Go1 / JCM 11833 / OCM 88) (Methanosarcina frisia).